A 390-amino-acid polypeptide reads, in one-letter code: Coiled-coil domain-containing protein 85C (390 aa).

2 coiled-coil regions span residues 26-86 (KEEL…RELC) and 116-146 (KEVG…KEII). The disordered stretch occupies residues 153 to 237 (RNGPGSRSSI…RSIPNGLNDS (85 aa)). Over residues 157–172 (GSRSSIDSQNSLTNLN) the composition is skewed to polar residues. Positions 182–194 (DGSSTSSTGSAGS) are enriched in low complexity.

The protein belongs to the CCDC85 family.

It localises to the cell junction. Its subcellular location is the tight junction. The protein resides in the adherens junction. Its function is as follows. May play a role in cell-cell adhesion and epithelium development. May play an important role in cortical development, especially in the maintenance of radial glia. In Xenopus laevis (African clawed frog), this protein is Coiled-coil domain-containing protein 85C (ccdc85c).